Consider the following 138-residue polypeptide: Large-conductance mechanosensitive channel (138 aa).

A run of 2 helical transmembrane segments spans residues 10–30 and 76–96; these read FAMR…AAFG and GSFI…FLAI.

The protein belongs to the MscL family. In terms of assembly, homopentamer.

Its subcellular location is the cell inner membrane. In terms of biological role, channel that opens in response to stretch forces in the membrane lipid bilayer. May participate in the regulation of osmotic pressure changes within the cell. This is Large-conductance mechanosensitive channel from Serratia proteamaculans (strain 568).